The primary structure comprises 289 residues: 4-hydroxy-3-methylbut-2-enyl diphosphate reductase (289 aa).

A [4Fe-4S] cluster-binding site is contributed by Cys-13. Residues His-42 and His-74 each coordinate (2E)-4-hydroxy-3-methylbut-2-enyl diphosphate. Dimethylallyl diphosphate-binding residues include His-42 and His-74. Isopentenyl diphosphate is bound by residues His-42 and His-74. Cys-96 is a binding site for [4Fe-4S] cluster. (2E)-4-hydroxy-3-methylbut-2-enyl diphosphate is bound at residue His-124. Dimethylallyl diphosphate is bound at residue His-124. Isopentenyl diphosphate is bound at residue His-124. Residue Glu-126 is the Proton donor of the active site. Thr-165 is a (2E)-4-hydroxy-3-methylbut-2-enyl diphosphate binding site. Residue Cys-193 participates in [4Fe-4S] cluster binding. 3 residues coordinate (2E)-4-hydroxy-3-methylbut-2-enyl diphosphate: Ser-221, Asn-223, and Ser-265. Positions 221, 223, and 265 each coordinate dimethylallyl diphosphate. 3 residues coordinate isopentenyl diphosphate: Ser-221, Asn-223, and Ser-265.

The protein belongs to the IspH family. The cofactor is [4Fe-4S] cluster.

It carries out the reaction isopentenyl diphosphate + 2 oxidized [2Fe-2S]-[ferredoxin] + H2O = (2E)-4-hydroxy-3-methylbut-2-enyl diphosphate + 2 reduced [2Fe-2S]-[ferredoxin] + 2 H(+). The enzyme catalyses dimethylallyl diphosphate + 2 oxidized [2Fe-2S]-[ferredoxin] + H2O = (2E)-4-hydroxy-3-methylbut-2-enyl diphosphate + 2 reduced [2Fe-2S]-[ferredoxin] + 2 H(+). It functions in the pathway isoprenoid biosynthesis; dimethylallyl diphosphate biosynthesis; dimethylallyl diphosphate from (2E)-4-hydroxy-3-methylbutenyl diphosphate: step 1/1. It participates in isoprenoid biosynthesis; isopentenyl diphosphate biosynthesis via DXP pathway; isopentenyl diphosphate from 1-deoxy-D-xylulose 5-phosphate: step 6/6. Its activity is regulated as follows. Highly sensitive to dioxygen. Its function is as follows. Catalyzes the conversion of 1-hydroxy-2-methyl-2-(E)-butenyl 4-diphosphate (HMBPP) into a mixture of isopentenyl diphosphate (IPP) and dimethylallyl diphosphate (DMAPP). Acts in the terminal step of the DOXP/MEP pathway for isoprenoid precursor biosynthesis. In Aquifex aeolicus (strain VF5), this protein is 4-hydroxy-3-methylbut-2-enyl diphosphate reductase.